The sequence spans 271 residues: Pyrroline-5-carboxylate reductase (271 aa).

The protein belongs to the pyrroline-5-carboxylate reductase family.

The protein localises to the cytoplasm. The enzyme catalyses L-proline + NADP(+) = (S)-1-pyrroline-5-carboxylate + NADPH + 2 H(+). The catalysed reaction is L-proline + NAD(+) = (S)-1-pyrroline-5-carboxylate + NADH + 2 H(+). It functions in the pathway amino-acid biosynthesis; L-proline biosynthesis; L-proline from L-glutamate 5-semialdehyde: step 1/1. In terms of biological role, catalyzes the reduction of 1-pyrroline-5-carboxylate (PCA) to L-proline. This chain is Pyrroline-5-carboxylate reductase, found in Staphylococcus saprophyticus subsp. saprophyticus (strain ATCC 15305 / DSM 20229 / NCIMB 8711 / NCTC 7292 / S-41).